Consider the following 264-residue polypeptide: Acyl-[acyl-carrier-protein]--UDP-N-acetylglucosamine O-acyltransferase (264 aa).

It belongs to the transferase hexapeptide repeat family. LpxA subfamily. In terms of assembly, homotrimer.

It is found in the cytoplasm. It carries out the reaction a (3R)-hydroxyacyl-[ACP] + UDP-N-acetyl-alpha-D-glucosamine = a UDP-3-O-[(3R)-3-hydroxyacyl]-N-acetyl-alpha-D-glucosamine + holo-[ACP]. The protein operates within glycolipid biosynthesis; lipid IV(A) biosynthesis; lipid IV(A) from (3R)-3-hydroxytetradecanoyl-[acyl-carrier-protein] and UDP-N-acetyl-alpha-D-glucosamine: step 1/6. In terms of biological role, involved in the biosynthesis of lipid A, a phosphorylated glycolipid that anchors the lipopolysaccharide to the outer membrane of the cell. The sequence is that of Acyl-[acyl-carrier-protein]--UDP-N-acetylglucosamine O-acyltransferase from Rickettsia rickettsii.